The following is a 312-amino-acid chain: MKIIFMGTPEFAVPSLEMLINEGYNVIAVVTQPDKPKGRGKKLAAPPVKEFALEHGIKVLQPAKIKTPEFVEQIRELGPDLLITAAYGKIISKDMLDVPPLGCINVHGSLLPAYRGAAPIHWSIINGEKVTGITTMFTDVGLDTGDMLLKRELEISSDMTAGELHDEMAILGAEVLKDTLIHLKNGTLVRSPQDDALSSYAPIITKEVGLIDWNKTVQQVHNLVRGTNPWPGAFTFINESKMRVWKTCIVDFGNSQEHCPGEIVSVDDKGILVKCCDGYIMIKELQFDSSKRMKVRDYIRGNKIDTGEKLGK.

109-112 (SLLP) lines the (6S)-5,6,7,8-tetrahydrofolate pocket.

It belongs to the Fmt family.

It carries out the reaction L-methionyl-tRNA(fMet) + (6R)-10-formyltetrahydrofolate = N-formyl-L-methionyl-tRNA(fMet) + (6S)-5,6,7,8-tetrahydrofolate + H(+). Attaches a formyl group to the free amino group of methionyl-tRNA(fMet). The formyl group appears to play a dual role in the initiator identity of N-formylmethionyl-tRNA by promoting its recognition by IF2 and preventing the misappropriation of this tRNA by the elongation apparatus. In Ruminiclostridium cellulolyticum (strain ATCC 35319 / DSM 5812 / JCM 6584 / H10) (Clostridium cellulolyticum), this protein is Methionyl-tRNA formyltransferase.